Reading from the N-terminus, the 156-residue chain is ATP synthase subunit b (156 aa).

Residues 5–25 (LTMIGQAIAFFIFVVFCMKYV) traverse the membrane as a helical segment.

This sequence belongs to the ATPase B chain family. As to quaternary structure, F-type ATPases have 2 components, F(1) - the catalytic core - and F(0) - the membrane proton channel. F(1) has five subunits: alpha(3), beta(3), gamma(1), delta(1), epsilon(1). F(0) has three main subunits: a(1), b(2) and c(10-14). The alpha and beta chains form an alternating ring which encloses part of the gamma chain. F(1) is attached to F(0) by a central stalk formed by the gamma and epsilon chains, while a peripheral stalk is formed by the delta and b chains.

The protein resides in the cell inner membrane. F(1)F(0) ATP synthase produces ATP from ADP in the presence of a proton or sodium gradient. F-type ATPases consist of two structural domains, F(1) containing the extramembraneous catalytic core and F(0) containing the membrane proton channel, linked together by a central stalk and a peripheral stalk. During catalysis, ATP synthesis in the catalytic domain of F(1) is coupled via a rotary mechanism of the central stalk subunits to proton translocation. Its function is as follows. Component of the F(0) channel, it forms part of the peripheral stalk, linking F(1) to F(0). This chain is ATP synthase subunit b, found in Hahella chejuensis (strain KCTC 2396).